A 180-amino-acid polypeptide reads, in one-letter code: Hypoxanthine-guanine phosphoribosyltransferase (180 aa).

2 residues coordinate diphosphate: K43 and G44. Residues E99 and D100 each contribute to the Mg(2+) site. Residue D103 is the Proton acceptor of the active site. GMP is bound by residues K131, 152–153 (FV), and D159. R165 lines the diphosphate pocket.

It belongs to the purine/pyrimidine phosphoribosyltransferase family. Mg(2+) is required as a cofactor.

The protein resides in the cytoplasm. It carries out the reaction IMP + diphosphate = hypoxanthine + 5-phospho-alpha-D-ribose 1-diphosphate. The enzyme catalyses GMP + diphosphate = guanine + 5-phospho-alpha-D-ribose 1-diphosphate. The protein operates within purine metabolism; IMP biosynthesis via salvage pathway; IMP from hypoxanthine: step 1/1. Its pathway is purine metabolism; GMP biosynthesis via salvage pathway; GMP from guanine: step 1/1. Purine salvage pathway enzyme that catalyzes the transfer of the ribosyl-5-phosphate group from 5-phospho-alpha-D-ribose 1-diphosphate (PRPP) to the N9 position of the 6-oxopurines hypoxanthine and guanine to form the corresponding ribonucleotides IMP (inosine 5'-monophosphate) and GMP (guanosine 5'-monophosphate), with the release of PPi. The protein is Hypoxanthine-guanine phosphoribosyltransferase (hprT) of Bacillus subtilis (strain 168).